We begin with the raw amino-acid sequence, 576 residues long: MDANSINSFFLIGALLTAVSVLLSPMSSRLGIPILLIFLAVGILAGEDGPGGILFDDYSTAYLVSNLALAIILLDGGMRTRVASFRVALWPALSLATFGVAITTSITGMMAAWLFDLHWLQGLLVGAIVGSTDAAAVFSLLKGRSLNERVGATLEIESGSNDPMAVFLTVTLIAILANVDTEMSFSFMFISFIKQFGLGICLGLGGGWMLWKLVNLSKLADGLYSILVLSGGLIIYAASNKLGGSGILSIYLVGLFLGNKPTRGRHAILNVLDGMTWVSQIGMFLVLGLLLTPSDLVDILIPGFALAFGMILFARPVAVWISLLPFKSFSSRDRWFISWVGLRGAVPIILAVFPMMAGLPGAQLYFNLAFFVVLVSLLVQGASLTTAARLAKVELPPKPLPVSRSGVEIYPSSEWEVFVYRLSESKWCIGEPLKRLAMPDGTRIAAVFRNDTLLHPSGSTRLEAGDILCVLGQEKSLEALSNLFSQAPENKEVQRFFGDFFIETDVKLADLAPIYGLSLDNLADDMTVADLVVSQLGANPVLGDQFQWQSLHWVVAGLYEGKVTNVGIRLPTEHSL.

Helical transmembrane passes span 6–26 (INSFFLIGALLTAVSVLLSPM), 34–54 (ILLIFLAVGILAGEDGPGGIL), 58–78 (YSTAYLVSNLALAIILLDGGM), 87–107 (VALWPALSLATFGVAITTSIT), 109–129 (MMAAWLFDLHWLQGLLVGAIV), 163–183 (PMAVFLTVTLIAILANVDTEM), 185–205 (FSFMFISFIKQFGLGICLGLG), 219–239 (LADGLYSILVLSGGLIIYAAS), 242–262 (LGGSGILSIYLVGLFLGNKPT), 271–291 (VLDGMTWVSQIGMFLVLGLLL), 299–319 (ILIPGFALAFGMILFARPVAV), 335–355 (WFISWVGLRGAVPIILAVFPM), and 359–379 (LPGAQLYFNLAFFVVLVSLLV). Residues 405 to 486 (SGVEIYPSSE…LEALSNLFSQ (82 aa)) enclose the RCK C-terminal domain.

It belongs to the monovalent cation:proton antiporter 1 (CPA1) transporter (TC 2.A.36) family. NhaP2 subfamily.

It is found in the cell inner membrane. The catalysed reaction is K(+)(in) + H(+)(out) = K(+)(out) + H(+)(in). Its function is as follows. K(+)/H(+) antiporter that extrudes potassium in exchange for external protons and maintains the internal concentration of potassium under toxic levels. This is K(+)/H(+) antiporter NhaP2 from Shewanella baltica (strain OS223).